The following is a 299-amino-acid chain: F-actin-capping protein subunit alpha-3 (299 aa).

S290 bears the Phosphoserine mark.

Belongs to the F-actin-capping protein alpha subunit family. In terms of assembly, component of the F-actin capping complex, composed of a heterodimer of an alpha and a beta subunit. Component of the WASH complex, composed of F-actin-capping protein subunit alpha (CAPZA1, CAPZA2 or CAPZA3), F-actin-capping protein subunit beta (CAPZB), WASH (WASHC1, WASH2P, WASH3P, WASH4P, WASH5P or WASH6P), WASHC2 (WASHC2A or WASHC2C), WASHC3, WASHC4 and WASHC5. Expressed exclusively in testis and sperm. Highest expression is found in the neck region of ejaculated sperm with lower levels found in the tail and postacrosome region.

It localises to the cytoplasm. The protein localises to the cytoskeleton. F-actin-capping proteins bind in a Ca(2+)-independent manner to the fast growing ends of actin filaments (barbed end) thereby blocking the exchange of subunits at these ends. Unlike other capping proteins (such as gelsolin and severin), these proteins do not sever actin filaments. May play a role in the morphogenesis of spermatid. The sequence is that of F-actin-capping protein subunit alpha-3 (CAPZA3) from Homo sapiens (Human).